A 492-amino-acid chain; its full sequence is Malonyl-CoA decarboxylase, mitochondrial (492 aa).

The transit peptide at 1-38 (MRGLGPSLRARRLLPLRYPPRPPGPRGPRLCSGLTASA) directs the protein to the mitochondrion. The alpha-helical domain stretch occupies residues 39–189 (MDELLRRAVP…VLKSMLSEWF (151 aa)). K58 carries the post-translational modification N6-acetyllysine. At K167 the chain carries N6-acetyllysine; alternate. K167 is subject to N6-succinyllysine; alternate. The interval 190–492 (SSGFLNLERV…VAQFQSNSKL (303 aa)) is catalytic domain. N6-acetyllysine is present on K210. K221 carries the post-translational modification N6-succinyllysine. 298 to 304 (QGVELGT) is a binding site for malonyl-CoA. K316 is modified (N6-acetyllysine). Position 328 (S328) interacts with malonyl-CoA. S328 functions as the Proton acceptor in the catalytic mechanism. K385 is modified (N6-acetyllysine; alternate). Residue K385 is modified to N6-succinyllysine; alternate. Residue K388 is modified to N6-acetyllysine. H422 contributes to the malonyl-CoA binding site. The Proton donor role is filled by H422. N6-acetyllysine occurs at positions 441 and 471. Positions 490–492 (SKL) match the Microbody targeting signal motif.

In terms of assembly, homotetramer. Dimer of dimers. The two subunits within a dimer display conformational differences suggesting that at any given moment, only one of the two subunits is competent for malonyl-CoA binding and catalytic activity. Under oxidizing conditions, can form disulfide-linked homotetramers (in vitro). Associates with the peroxisomal targeting signal receptor PEX5. In terms of processing, acetylation at Lys-471 activates malonyl-CoA decarboxylase activity. Deacetylation at Lys-471 by SIRT4 represses activity, leading to promote lipogenesis. Interchain disulfide bonds may form in peroxisomes (Potential). Interchain disulfide bonds are not expected to form in the reducing environment of the cytoplasm and mitochondria. As to expression, expressed in liver, heart, skeletal muscles and adipose tissues (at protein level). Ubiquitous. Strongly expressed in liver, kidney, heart, skeletal muscle and adipose tissues. Weakly expressed in brain.

The protein resides in the cytoplasm. Its subcellular location is the mitochondrion matrix. It localises to the peroxisome. The protein localises to the peroxisome matrix. The enzyme catalyses malonyl-CoA + H(+) = acetyl-CoA + CO2. The protein operates within metabolic intermediate biosynthesis; acetyl-CoA biosynthesis; acetyl-CoA from malonyl-CoA: step 1/1. Malonyl-CoA decarboxylase activity does not require any cofactors or divalent metal ions. In terms of biological role, catalyzes the conversion of malonyl-CoA to acetyl-CoA. In the fatty acid biosynthesis MCD selectively removes malonyl-CoA and thus assures that methyl-malonyl-CoA is the only chain elongating substrate for fatty acid synthase and that fatty acids with multiple methyl side chains are produced. In peroxisomes it may be involved in degrading intraperoxisomal malonyl-CoA, which is generated by the peroxisomal beta-oxidation of odd chain-length dicarboxylic fatty acids. Plays a role in the metabolic balance between glucose and lipid oxidation in muscle independent of alterations in insulin signaling. May play a role in controlling the extent of ischemic injury by promoting glucose oxidation. The protein is Malonyl-CoA decarboxylase, mitochondrial of Rattus norvegicus (Rat).